Reading from the N-terminus, the 312-residue chain is Transcription initiation factor IIB (312 aa).

The TFIIB-type zinc-finger motif lies at 10–42 (FVQTCSDCGETQNIVEDYKNGYHVCGRCGCIVG). Positions 14, 17, 34, and 37 each coordinate Zn(2+). 2 repeat units span residues 120–196 (FCER…LISP) and 213–290 (FCSD…ELLT).

The protein belongs to the TFIIB family. In terms of assembly, associates with TFIID-IIA (DA complex) to form TFIID-IIA-IIB (DAB-complex) which is then recognized by polymerase II.

It is found in the nucleus. General factor that plays a major role in the activation of eukaryotic genes transcribed by RNA polymerase II. The chain is Transcription initiation factor IIB from Encephalitozoon cuniculi (strain GB-M1) (Microsporidian parasite).